An 85-amino-acid chain; its full sequence is U4-theraphotoxin-Hhn1a (85 aa).

Residues 1–22 form the signal peptide; that stretch reads MKVTLIAILTCAAVLVLHTTAA. The propeptide occupies 23–48; it reads EELEAESQLMEVGMPDTELAAVDEER. Intrachain disulfides connect Cys-52–Cys-66, Cys-56–Cys-77, and Cys-71–Cys-82.

It belongs to the neurotoxin 12 (Hwtx-2) family. 02 (Hwtx-2) subfamily. In terms of assembly, monomer. Expressed by the venom gland.

Its subcellular location is the secreted. In terms of biological role, neurotoxin active on both insects and mammals. The sequence is that of U4-theraphotoxin-Hhn1a from Cyriopagopus hainanus (Chinese bird spider).